Here is a 455-residue protein sequence, read N- to C-terminus: SUN domain-containing protein 2 (455 aa).

Over residues 1–12 the composition is skewed to polar residues; that stretch reads MSASTVSITASP. The disordered stretch occupies residues 1–99; that stretch reads MSASTVSITA…RTRKSQGNKI (99 aa). S2 is subject to N-acetylserine. At 2–105 the chain is on the nuclear side; it reads SASTVSITAS…GNKIDRGKWK (104 aa). At S63 the chain carries Phosphoserine. Residues 74–88 show a composition bias toward low complexity; sequence KSGSTATGTNTTTTQ. A Nuclear localization signal motif is present at residues 88-95; the sequence is QRRTRKSQ. Residues 106 to 128 form a helical membrane-spanning segment; that stretch reads TVVRVFAKQFGALLLLVGLIQLI. At 129 to 455 the chain is on the perinuclear space side; it reads RKLTLKDSSL…ELDSVSVAHA (327 aa). The stretch at 201–225 forms a coiled coil; the sequence is LHSELKKVESKTERLQVSVDELNAK. Positions 285 to 447 constitute an SUN domain; that stretch reads GGAFVMGHSD…YRFRVHGREL (163 aa).

As to quaternary structure, forms homomers (e.g. dimers, trimers and tetramers) and heteromers with SUN1. Interacts with SUN3, SUN4 and TIK. Core component of the LINC complex which is composed of inner nuclear membrane SUN domain-containing proteins coupled to outer nuclear membrane WIP and WIT proteins. The LINC complex also involves nucleoskeletal proteins CRWN/LINC and possibly KAKU4 and the cytoskeletal myosin KAKU1. Interacts with LINC1, WIP1, WIP2 and WIP3 at the nuclear envelope (NE). Interacts with SINE1, SINE2, SINE3 and SINE4. Interacts with NEAP1, NEA2 and NEAP3. As to expression, expressed in roots, hypocotyls, cotyledons and leaves and inflorescences.

It localises to the nucleus inner membrane. It is found in the cytoplasm. The protein localises to the cytoskeleton. Its subcellular location is the phragmoplast. The protein resides in the endoplasmic reticulum membrane. It localises to the nucleus envelope. Functionally, component of SUN-protein-containing multivariate complexes also called LINC complexes which link the nucleoskeleton and cytoskeleton by providing versatile outer nuclear membrane attachment sites for cytoskeletal filaments. Required for the maintenance and/or formation of polarized nuclear shape in root hairs. Modulates the anchoring and mobility of WIP proteins in the nuclear envelope (NE). In association with SUN1, may be involved in telomere attachment to nuclear envelope in the prophase of meiosis. As component of the SUN-WIP-WIT2-KAKU1 complex, mediates the transfer of cytoplasmic forces to the nuclear envelope (NE), leading to nuclear shape changes. The chain is SUN domain-containing protein 2 from Arabidopsis thaliana (Mouse-ear cress).